A 473-amino-acid chain; its full sequence is Zinc finger and SCAN domain-containing protein 21 (473 aa).

Residue lysine 27 forms a Glycyl lysine isopeptide (Lys-Gly) (interchain with G-Cter in SUMO2) linkage. The SCAN box domain occupies arginine 45 to leucine 127. A disordered region spans residues leucine 127–serine 169. Positions isoleucine 148–glutamate 167 are enriched in polar residues. Residues lysine 221 and lysine 232 each participate in a glycyl lysine isopeptide (Lys-Gly) (interchain with G-Cter in SUMO2) cross-link. The tract at residues leucine 244–proline 272 is disordered. The span at glycine 258 to proline 272 shows a compositional bias: basic and acidic residues. 7 C2H2-type zinc fingers span residues tyrosine 277–histidine 299, tyrosine 305–histidine 327, tyrosine 333–histidine 354, tyrosine 360–histidine 382, tyrosine 388–histidine 410, tyrosine 416–histidine 438, and tyrosine 444–histidine 466. Lysine 349 is covalently cross-linked (Glycyl lysine isopeptide (Lys-Gly) (interchain with G-Cter in SUMO2)).

This sequence belongs to the krueppel C2H2-type zinc-finger protein family.

It is found in the nucleus. Its function is as follows. Strong transcriptional activator. Plays an important role in spermatogenesis; essential for the progression of meiotic prophase I in spermatocytes. In Homo sapiens (Human), this protein is Zinc finger and SCAN domain-containing protein 21 (ZSCAN21).